Reading from the N-terminus, the 95-residue chain is Aspartyl/glutamyl-tRNA(Asn/Gln) amidotransferase subunit C (95 aa).

It belongs to the GatC family. Heterotrimer of A, B and C subunits.

The catalysed reaction is L-glutamyl-tRNA(Gln) + L-glutamine + ATP + H2O = L-glutaminyl-tRNA(Gln) + L-glutamate + ADP + phosphate + H(+). It carries out the reaction L-aspartyl-tRNA(Asn) + L-glutamine + ATP + H2O = L-asparaginyl-tRNA(Asn) + L-glutamate + ADP + phosphate + 2 H(+). In terms of biological role, allows the formation of correctly charged Asn-tRNA(Asn) or Gln-tRNA(Gln) through the transamidation of misacylated Asp-tRNA(Asn) or Glu-tRNA(Gln) in organisms which lack either or both of asparaginyl-tRNA or glutaminyl-tRNA synthetases. The reaction takes place in the presence of glutamine and ATP through an activated phospho-Asp-tRNA(Asn) or phospho-Glu-tRNA(Gln). The polypeptide is Aspartyl/glutamyl-tRNA(Asn/Gln) amidotransferase subunit C (Chloroherpeton thalassium (strain ATCC 35110 / GB-78)).